The sequence spans 1331 residues: Sodium-dependent transporter bedraggled (1331 aa).

A disordered region spans residues 1 to 62 (MSSKEQQAAG…QLEHEQFGLS (62 aa)). The segment covering 16–25 (NSNAYSSLPP) has biased composition (polar residues). The span at 28–43 (TGAGCSGAALGSGTGT) shows a compositional bias: gly residues. The N-linked (GlcNAc...) asparagine glycan is linked to Asn168. Disordered stretches follow at residues 221 to 284 (EPRT…TEPV) and 363 to 473 (QTNA…SASS). The span at 258–282 (KTFSCSLRPTSQIASSSGSLETSTE) shows a compositional bias: polar residues. Residues 369 to 383 (SSEEPRPRQYGRRLE) are compositionally biased toward basic and acidic residues. The segment covering 413–436 (LQDTPTHPIMSTCSELSSARSSRM) has biased composition (polar residues). A compositionally biased stretch (low complexity) spans 437-453 (PSPVSLPSDSSSSGSSS). The span at 463–473 (VQTTTMCSASS) shows a compositional bias: polar residues. Helical transmembrane passes span 505–525 (LALI…VLTI), 531–551 (FLLQ…WLQM), and 567–587 (ISPI…FLAL). Asn627 and Asn631 each carry an N-linked (GlcNAc...) asparagine glycan. 4 helical membrane-spanning segments follow: residues 667–687 (QLAF…CKGL), 696–716 (IIYT…VYVV), 741–761 (TAAT…VIAI), and 778–798 (AILL…LALC). A glycan (N-linked (GlcNAc...) asparagine) is linked at Asn857. A helical membrane pass occupies residues 890-910 (WVWAAVAFATFAGFGLAQLCV). The N-linked (GlcNAc...) asparagine glycan is linked to Asn921. 4 consecutive transmembrane segments (helical) span residues 926 to 946 (VLLS…EMGI), 956 to 976 (LGGS…VFLI), 998 to 1018 (AFLA…LSVV), and 1044 to 1064 (MGSL…IIQI). 3 disordered regions span residues 1086-1136 (PEEG…SYTT), 1169-1238 (SLDA…ASTL), and 1256-1275 (VRHR…TLPR). 2 stretches are compositionally biased toward polar residues: residues 1097–1115 (ARQT…TTEG) and 1186–1196 (ILTNPAGSSFN). Positions 1197 to 1209 (ADPSPASSSSPES) are enriched in low complexity.

The protein belongs to the sodium:neurotransmitter symporter (SNF) (TC 2.A.22) family.

It is found in the membrane. Functionally, putative sodium-dependent transporter which is required for viability, early imaginal disk development and adult motor coordination. Also has a role in the fate commitment of the R3/R4 photoreceptor cells. May function in ommatidial polarity by regulating the activity of the core polarity genes, acting upstream of (or in parallel to) Vang, dsh, pk, stan, and dgo, but downstream or independently of fz. In Drosophila melanogaster (Fruit fly), this protein is Sodium-dependent transporter bedraggled.